The primary structure comprises 164 residues: ATP synthase subunit b 1 (164 aa).

The helical transmembrane segment at 8–28 (AETWVAVGFAILMVVFVYFGV) threads the bilayer.

Belongs to the ATPase B chain family. In terms of assembly, F-type ATPases have 2 components, F(1) - the catalytic core - and F(0) - the membrane proton channel. F(1) has five subunits: alpha(3), beta(3), gamma(1), delta(1), epsilon(1). F(0) has three main subunits: a(1), b(2) and c(10-14). The alpha and beta chains form an alternating ring which encloses part of the gamma chain. F(1) is attached to F(0) by a central stalk formed by the gamma and epsilon chains, while a peripheral stalk is formed by the delta and b chains.

It is found in the cell inner membrane. In terms of biological role, f(1)F(0) ATP synthase produces ATP from ADP in the presence of a proton or sodium gradient. F-type ATPases consist of two structural domains, F(1) containing the extramembraneous catalytic core and F(0) containing the membrane proton channel, linked together by a central stalk and a peripheral stalk. During catalysis, ATP synthesis in the catalytic domain of F(1) is coupled via a rotary mechanism of the central stalk subunits to proton translocation. Component of the F(0) channel, it forms part of the peripheral stalk, linking F(1) to F(0). The protein is ATP synthase subunit b 1 of Rhodopseudomonas palustris (strain BisA53).